Here is a 271-residue protein sequence, read N- to C-terminus: Glutamate racemase (271 aa).

Substrate-binding positions include 13 to 14 (DS) and 45 to 46 (YG). Cysteine 77 functions as the Proton donor/acceptor in the catalytic mechanism. 78 to 79 (NT) lines the substrate pocket. Cysteine 192 acts as the Proton donor/acceptor in catalysis. A substrate-binding site is contributed by 193 to 194 (TH).

It belongs to the aspartate/glutamate racemases family.

The catalysed reaction is L-glutamate = D-glutamate. Its pathway is cell wall biogenesis; peptidoglycan biosynthesis. Provides the (R)-glutamate required for cell wall biosynthesis. This chain is Glutamate racemase, found in Sinorhizobium medicae (strain WSM419) (Ensifer medicae).